A 340-amino-acid chain; its full sequence is Protein arginine N-methyltransferase 1 (340 aa).

Residues 16–311 (KDYYFDSYSH…TCKPAEGNHR (296 aa)) form the SAM-dependent MTase PRMT-type domain. Tyrosine 19 carries the post-translational modification Phosphotyrosine. Residues histidine 29, arginine 38, glycine 62, aspartate 84, and glutamate 113 each coordinate S-adenosyl-L-methionine. Residues glutamate 128 and glutamate 137 contribute to the active site. Position 176 is a phosphoserine (serine 176).

This sequence belongs to the class I-like SAM-binding methyltransferase superfamily. Protein arginine N-methyltransferase family. As to quaternary structure, interacts with pab2.

It localises to the nucleus. It catalyses the reaction L-arginyl-[protein] + S-adenosyl-L-methionine = N(omega)-methyl-L-arginyl-[protein] + S-adenosyl-L-homocysteine + H(+). The enzyme catalyses L-arginyl-[protein] + 2 S-adenosyl-L-methionine = N(omega),N(omega)-dimethyl-L-arginyl-[protein] + 2 S-adenosyl-L-homocysteine + 2 H(+). Its function is as follows. S-adenosyl-L-methionine-dependent protein-arginine N-methyltransferase that catalyzes both the mono- and asymmetric (type I) dimethylation of the guanidino nitrogens of arginine residues in target proteins. Asymmetrically dimethylates the polyadenylate-binding protein pab2, modulating pab2 oligomerization. This is Protein arginine N-methyltransferase 1 from Schizosaccharomyces pombe (strain 972 / ATCC 24843) (Fission yeast).